A 191-amino-acid polypeptide reads, in one-letter code: Neurotrophic factor BDNF precursor form (191 aa).

The disordered stretch occupies residues 1 to 23; the sequence is GQGSLAYPGLRTQGNLETLGGPN. Residues 1 to 100 constitute a propeptide that is removed on maturation; it reads GQGSLAYPGL…AANMSMRVRR (100 aa). N93 is a glycosylation site (N-linked (GlcNAc...) asparagine). Residues C113 and C180 are joined by a disulfide bond.

The protein belongs to the NGF-beta family.

It localises to the secreted. Functionally, promotes the survival of neuronal populations that are all located either in the central nervous system or directly connected to it. The chain is Neurotrophic factor BDNF precursor form (BDNF) from Anilius scytale (Coral cylinder snake).